We begin with the raw amino-acid sequence, 176 residues long: Large ribosomal subunit protein bL12m (176 aa).

It belongs to the bacterial ribosomal protein bL12 family. As to quaternary structure, component of the mitochondrial large ribosomal subunit (mt-LSU). Mature N.crassa 74S mitochondrial ribosomes consist of a small (37S) and a large (54S) subunit. The 37S small subunit contains a 16S ribosomal RNA (16S mt-rRNA) and 32 different proteins. The 54S large subunit contains a 23S rRNA (23S mt-rRNA) and 42 different proteins.

It localises to the mitochondrion. In terms of biological role, component of the mitochondrial ribosome (mitoribosome), a dedicated translation machinery responsible for the synthesis of mitochondrial genome-encoded proteins, including at least some of the essential transmembrane subunits of the mitochondrial respiratory chain. The mitoribosomes are attached to the mitochondrial inner membrane and translation products are cotranslationally integrated into the membrane. The sequence is that of Large ribosomal subunit protein bL12m (mrpl12) from Neurospora crassa (strain ATCC 24698 / 74-OR23-1A / CBS 708.71 / DSM 1257 / FGSC 987).